Consider the following 452-residue polypeptide: tRNA modification GTPase MnmE (452 aa).

(6S)-5-formyl-5,6,7,8-tetrahydrofolate-binding residues include R21, E78, and K118. A TrmE-type G domain is found at 214-375 (GMKVVIAGRP…LREHLKQAMG (162 aa)). Residue N224 participates in K(+) binding. GTP contacts are provided by residues 224–229 (NAGKSS), 243–249 (TDIAGTT), and 268–271 (DTAG). Residue S228 coordinates Mg(2+). T243, I245, and T248 together coordinate K(+). T249 contributes to the Mg(2+) binding site. K452 provides a ligand contact to (6S)-5-formyl-5,6,7,8-tetrahydrofolate.

This sequence belongs to the TRAFAC class TrmE-Era-EngA-EngB-Septin-like GTPase superfamily. TrmE GTPase family. Homodimer. Heterotetramer of two MnmE and two MnmG subunits. K(+) is required as a cofactor.

It localises to the cytoplasm. Functionally, exhibits a very high intrinsic GTPase hydrolysis rate. Involved in the addition of a carboxymethylaminomethyl (cmnm) group at the wobble position (U34) of certain tRNAs, forming tRNA-cmnm(5)s(2)U34. The sequence is that of tRNA modification GTPase MnmE from Haemophilus influenzae (strain ATCC 51907 / DSM 11121 / KW20 / Rd).